A 1157-amino-acid chain; its full sequence is uncharacterized protein (1157 aa).

Positions 1–10 (MDPHWKRHDS) are enriched in basic and acidic residues. Disordered stretches follow at residues 1–35 (MDPH…QRFG), 159–233 (QTTP…SVEP), and 478–498 (KNQS…GKGP). 2 stretches are compositionally biased toward low complexity: residues 18–31 (SPSA…PSSA) and 181–197 (SAGT…NPNF). The segment covering 208–228 (QEWQQSPLESPLSMHSLQESL) has biased composition (polar residues). The region spanning 501–574 (VWFKPSDKRI…KVEYKAILHD (74 aa)) is the CSD2 domain. An RNB domain is found at 608 to 921 (LRDKLTFMIG…ICVQRQLREA (314 aa)). One can recognise a DIS3L2 C-terminal domain in the interval 973-1030 (GLVKHKAFVLAVDQEYIDIVIYEFGLERRISLDLLPLSNCDFNEQKHELYLSWRTNAS). The tract at residues 1084–1113 (YSKARGNDSTSKTAKSSSGNQDISGDGKLH) is disordered. Residues 1090 to 1106 (NDSTSKTAKSSSGNQDI) show a composition bias toward polar residues.

It belongs to the RNR ribonuclease family.

The protein localises to the cytoplasm. This is an uncharacterized protein from Schizosaccharomyces pombe (strain 972 / ATCC 24843) (Fission yeast).